A 163-amino-acid chain; its full sequence is Nucleotide-binding protein APJL_1242 (163 aa).

The protein belongs to the YajQ family.

Its function is as follows. Nucleotide-binding protein. This Actinobacillus pleuropneumoniae serotype 3 (strain JL03) protein is Nucleotide-binding protein APJL_1242.